Reading from the N-terminus, the 181-residue chain is Adenylate kinase (181 aa).

10 to 15 (GAGKGT) lines the ATP pocket. Positions 30 to 59 (STGELFRSNIENGTKLGLEAKRYLDAGDLV) are NMP. AMP-binding positions include Thr31, Arg36, 57-59 (DLV), 85-88 (GFPR), and Gln92. Residues 126-132 (ARGRADD) form an LID region. An ATP-binding site is contributed by Arg127. The AMP site is built by Arg129 and Arg140. Gly166 is a binding site for ATP.

Belongs to the adenylate kinase family. In terms of assembly, monomer.

It localises to the cytoplasm. It carries out the reaction AMP + ATP = 2 ADP. It functions in the pathway purine metabolism; AMP biosynthesis via salvage pathway; AMP from ADP: step 1/1. Functionally, catalyzes the reversible transfer of the terminal phosphate group between ATP and AMP. Plays an important role in cellular energy homeostasis and in adenine nucleotide metabolism. The chain is Adenylate kinase from Mycolicibacterium paratuberculosis (strain ATCC BAA-968 / K-10) (Mycobacterium paratuberculosis).